A 389-amino-acid chain; its full sequence is E3 ubiquitin-protein ligase E3D (389 aa).

Position 2 is an N-acetylalanine (A2). The short motif at 129–159 is the BRAT1-like motif element; sequence PLPSENWGALVGEWCCHPDPFANKSLHPQEN. Position 144 (C144) interacts with Zn(2+). The interval 235–257 is interaction with UBE2C; that stretch reads QSSERSFPIIPRSWFVQSVIAQC. The tract at residues 353 to 389 is HECT-like; that stretch reads LPSATCLELLLILSKSNANLPSSLRRVNSFQVAFLKM.

In terms of assembly, interacts with UBE2C/UbcH10 (E2 ubiquitin-conjugating enzyme). In vitro, interacts with cyclin-B. Post-translationally, ubiquitinated by UBCH10 (E2 ubiquitin-conjugating enzyme).

The protein localises to the cytoplasm. It catalyses the reaction S-ubiquitinyl-[E2 ubiquitin-conjugating enzyme]-L-cysteine + [acceptor protein]-L-lysine = [E2 ubiquitin-conjugating enzyme]-L-cysteine + N(6)-ubiquitinyl-[acceptor protein]-L-lysine.. It participates in protein modification; protein ubiquitination. Functionally, E3 ubiquitin-protein ligase which accepts ubiquitin from specific E2 ubiquitin-conjugating enzymes, and transfers it to substrates, generally promoting their degradation by the proteasome. Independently of its E3 ubiquitin-protein ligase activity, acts as an inhibitor of CPSF3 endonuclease activity by blocking CPSF3 active site. The polypeptide is E3 ubiquitin-protein ligase E3D (UBE3D) (Homo sapiens (Human)).